Here is a 241-residue protein sequence, read N- to C-terminus: MVAISMREMLEAGVHFGHKTRYWNPKMKPFVFGSRNGIHIINLEFTVTMLNNALSELRKISARKGKILFVGTKRAASEAIKEAAGNCAQFFVHHRWLGGMLTNWKTVRQSIKRLKDLETQSQDGTFEKLTKKEALMRTRELNKLENSLGGIKNMGGLPDALFVIDANHEHIAVKEANNLGIPVFSIVDTNSDPDGIDFIIPGNDDAIRSIKLYLNAVSAAISEGRSENSVMQKEESLIETK.

Belongs to the universal ribosomal protein uS2 family.

The chain is Small ribosomal subunit protein uS2 from Hamiltonella defensa subsp. Acyrthosiphon pisum (strain 5AT).